Here is a 228-residue protein sequence, read N- to C-terminus: uncharacterized protein (228 aa).

Residue 21 to 28 (GMIALGKT) participates in ATP binding.

This is an uncharacterized protein from Mycoplasma genitalium (strain ATCC 33530 / DSM 19775 / NCTC 10195 / G37) (Mycoplasmoides genitalium).